Consider the following 78-residue polypeptide: Large ribosomal subunit protein bL28 (78 aa).

Belongs to the bacterial ribosomal protein bL28 family.

This chain is Large ribosomal subunit protein bL28, found in Francisella philomiragia subsp. philomiragia (strain ATCC 25017 / CCUG 19701 / FSC 153 / O#319-036).